The following is a 396-amino-acid chain: Putative nickel insertion protein (396 aa).

It belongs to the LarC family.

In Wolinella succinogenes (strain ATCC 29543 / DSM 1740 / CCUG 13145 / JCM 31913 / LMG 7466 / NCTC 11488 / FDC 602W) (Vibrio succinogenes), this protein is Putative nickel insertion protein.